The chain runs to 261 residues: Hydroxyethylthiazole kinase (261 aa).

M38 is a substrate binding site. Positions 114 and 159 each coordinate ATP. G186 contributes to the substrate binding site.

It belongs to the Thz kinase family. Mg(2+) serves as cofactor.

The catalysed reaction is 5-(2-hydroxyethyl)-4-methylthiazole + ATP = 4-methyl-5-(2-phosphooxyethyl)-thiazole + ADP + H(+). It functions in the pathway cofactor biosynthesis; thiamine diphosphate biosynthesis; 4-methyl-5-(2-phosphoethyl)-thiazole from 5-(2-hydroxyethyl)-4-methylthiazole: step 1/1. In terms of biological role, catalyzes the phosphorylation of the hydroxyl group of 4-methyl-5-beta-hydroxyethylthiazole (THZ). In Streptococcus suis (strain 05ZYH33), this protein is Hydroxyethylthiazole kinase.